Here is a 561-residue protein sequence, read N- to C-terminus: ATP-dependent RNA helicase MRH4, mitochondrial (561 aa).

The transit peptide at 1 to 26 directs the protein to the mitochondrion; the sequence is MSLFFKPVISPQWSFPVLLKIGVRSY. Residues 29–72 form a disordered region; the sequence is GPRTKHKGNSPLASVPTGSSNKNRKQKAKGKKGNKKNDPDQAFN. The segment covering 50–62 has biased composition (basic residues); sequence KNRKQKAKGKKGN. The Q motif motif lies at 98–129; sequence SNFDQLLILPPVRDAVKEIISKESLKLQDSRK. The region spanning 131–319 is the Helicase ATP-binding domain; sequence TSENIIPSPI…NINHLIFCSA (189 aa). 144-151 serves as a coordination point for ATP; it reads AIKRISKN. A DEAD box motif is present at residues 267–270; sequence SIRM. Residues 350 to 539 form the Helicase C-terminal domain; that stretch reads ALDFKVINSA…KQGGRVFMLT (190 aa).

This sequence belongs to the DEAD box helicase family. MRH4 subfamily.

Its subcellular location is the mitochondrion. The catalysed reaction is ATP + H2O = ADP + phosphate + H(+). Its function is as follows. ATP-binding RNA helicase involved in mitochondrial RNA metabolism. Required for maintenance of mitochondrial DNA. In Saccharomyces cerevisiae (strain YJM789) (Baker's yeast), this protein is ATP-dependent RNA helicase MRH4, mitochondrial (MRH4).